The primary structure comprises 374 residues: Pectate lyase 1 (374 aa).

An N-terminal signal peptide occupies residues 1–22 (MKYLLPSAAAGLLLLAAQPTMA). Cys93 and Cys176 are disulfide-bonded. Residues Asp150, Asp152, Glu187, and Asp191 each contribute to the Ca(2+) site. Arg239 is a catalytic residue. Cys350 and Cys373 form a disulfide bridge.

This sequence belongs to the polysaccharide lyase 1 family. PLADES subfamily. Ca(2+) serves as cofactor.

The protein resides in the secreted. It catalyses the reaction Eliminative cleavage of (1-&gt;4)-alpha-D-galacturonan to give oligosaccharides with 4-deoxy-alpha-D-galact-4-enuronosyl groups at their non-reducing ends.. The protein operates within glycan metabolism; pectin degradation; 2-dehydro-3-deoxy-D-gluconate from pectin: step 2/5. Functionally, involved in maceration and soft-rotting of plant tissue. The chain is Pectate lyase 1 (pel1) from Pectobacterium carotovorum (Erwinia carotovora).